A 136-amino-acid polypeptide reads, in one-letter code: Ribosome-binding factor A (136 aa).

Positions alanine 116 to glutamine 136 are disordered.

It belongs to the RbfA family. As to quaternary structure, monomer. Binds 30S ribosomal subunits, but not 50S ribosomal subunits or 70S ribosomes.

The protein resides in the cytoplasm. Its function is as follows. One of several proteins that assist in the late maturation steps of the functional core of the 30S ribosomal subunit. Associates with free 30S ribosomal subunits (but not with 30S subunits that are part of 70S ribosomes or polysomes). Required for efficient processing of 16S rRNA. May interact with the 5'-terminal helix region of 16S rRNA. The protein is Ribosome-binding factor A of Lachnoclostridium phytofermentans (strain ATCC 700394 / DSM 18823 / ISDg) (Clostridium phytofermentans).